The sequence spans 408 residues: MKVLVINAGSSSLKYQLIDMTNESALAIGLCERIGIDNSIITQKRFDGKKLEKQTDLPNHKIALEEVVKALTDSEFGVIKSMDEINAVGHRVVHGGEKFNSSALINEGVEQAIKDCFELAPLHNPPNMMGISSCQEIMPGVPMVAVFDTAFHHTIPPYAYMYALPYELYEKYGIRKYGFHGTSHFYVAKRAAAMLGKPEQDVKVITCHLGNGSSITAVKGGKSIETTMGFTPLEGVAMGTRCGSIDPAVVPFIMEKEGLSTREIDTLMNKKSGVLGVSSLSNDFRDLDEAASKGNQKAELALEIFAYKIKKVIGEYIAVLNGVDAIVFTAGIGENSASIRKRILADLDGIGIKIDEEKNKIRGQEIDISTPDATVRVLVIPTNEELTIARDTKEICETEVKLRSSVPI.

Mg(2+) is bound at residue asparagine 7. ATP is bound at residue lysine 14. Arginine 91 is a binding site for substrate. Aspartate 148 (proton donor/acceptor) is an active-site residue. Residues 208–212 (HLGNG), 283–285 (DFR), and 331–335 (GIGEN) contribute to the ATP site. Mg(2+) is bound at residue glutamate 384.

It belongs to the acetokinase family. As to quaternary structure, homodimer. Mg(2+) is required as a cofactor. The cofactor is Mn(2+).

The protein localises to the cytoplasm. The catalysed reaction is acetate + ATP = acetyl phosphate + ADP. Its pathway is metabolic intermediate biosynthesis; acetyl-CoA biosynthesis; acetyl-CoA from acetate: step 1/2. Functionally, catalyzes the formation of acetyl phosphate from acetate and ATP. Can also catalyze the reverse reaction. In Methanosarcina mazei (strain ATCC BAA-159 / DSM 3647 / Goe1 / Go1 / JCM 11833 / OCM 88) (Methanosarcina frisia), this protein is Acetate kinase.